We begin with the raw amino-acid sequence, 89 residues long: Bombyxin B-2 (89 aa).

The first 19 residues, 1–19 (MKTSVMFMLVFVISLMCSS), serve as a signal peptide directing secretion. Disulfide bonds link C29–C75, C41–C88, and C74–C79. Positions 48 to 66 (SGAQYAPYFWTRQYLGSRG) are cleaved as a propeptide — c peptide like.

Belongs to the insulin family. In terms of assembly, heterodimer of a B chain and an A chain linked by two disulfide bonds.

It is found in the secreted. Brain peptide responsible for activation of prothoracic glands to produce ecdysone in insects. In Bombyx mori (Silk moth), this protein is Bombyxin B-2 (BBXB2).